We begin with the raw amino-acid sequence, 158 residues long: Transcription elongation factor GreA (158 aa).

The stretch at 53–75 (AKERQGQVEATIGDLEDKLSRAQ) forms a coiled coil.

Belongs to the GreA/GreB family.

Necessary for efficient RNA polymerase transcription elongation past template-encoded arresting sites. The arresting sites in DNA have the property of trapping a certain fraction of elongating RNA polymerases that pass through, resulting in locked ternary complexes. Cleavage of the nascent transcript by cleavage factors such as GreA or GreB allows the resumption of elongation from the new 3'terminus. GreA releases sequences of 2 to 3 nucleotides. The sequence is that of Transcription elongation factor GreA from Sphingopyxis alaskensis (strain DSM 13593 / LMG 18877 / RB2256) (Sphingomonas alaskensis).